The chain runs to 338 residues: Glyceraldehyde-3-phosphate dehydrogenase (338 aa).

NAD(+)-binding positions include Arg-12–Ile-13, Asp-34, and Arg-80. D-glyceraldehyde 3-phosphate is bound by residues Ser-151 to Thr-153, Thr-182, Thr-211 to Gly-212, and Arg-234. The Nucleophile role is filled by Cys-152. Asn-316 provides a ligand contact to NAD(+).

This sequence belongs to the glyceraldehyde-3-phosphate dehydrogenase family. In terms of assembly, homotetramer.

It localises to the cytoplasm. It carries out the reaction D-glyceraldehyde 3-phosphate + phosphate + NAD(+) = (2R)-3-phospho-glyceroyl phosphate + NADH + H(+). Its pathway is carbohydrate degradation; glycolysis; pyruvate from D-glyceraldehyde 3-phosphate: step 1/5. This chain is Glyceraldehyde-3-phosphate dehydrogenase (GPD), found in Paracoccidioides lutzii (strain ATCC MYA-826 / Pb01) (Paracoccidioides brasiliensis).